The chain runs to 126 residues: Holo-[acyl-carrier-protein] synthase (126 aa).

2 residues coordinate Mg(2+): D9 and E58.

This sequence belongs to the P-Pant transferase superfamily. AcpS family. Requires Mg(2+) as cofactor.

It localises to the cytoplasm. The catalysed reaction is apo-[ACP] + CoA = holo-[ACP] + adenosine 3',5'-bisphosphate + H(+). Transfers the 4'-phosphopantetheine moiety from coenzyme A to a Ser of acyl-carrier-protein. This chain is Holo-[acyl-carrier-protein] synthase, found in Pectobacterium atrosepticum (strain SCRI 1043 / ATCC BAA-672) (Erwinia carotovora subsp. atroseptica).